The chain runs to 334 residues: Glycerol-1-phosphate dehydrogenase [NAD(P)+] (334 aa).

NAD(+) contacts are provided by residues G77–D81 and T99–S102. D104 contributes to the substrate binding site. An NAD(+)-binding site is contributed by S108. Residue D147 participates in substrate binding. 2 residues coordinate Zn(2+): D147 and H225. A substrate-binding site is contributed by H229. A Zn(2+)-binding site is contributed by H246.

This sequence belongs to the glycerol-1-phosphate dehydrogenase family. Zn(2+) is required as a cofactor.

Its subcellular location is the cytoplasm. The catalysed reaction is sn-glycerol 1-phosphate + NAD(+) = dihydroxyacetone phosphate + NADH + H(+). It catalyses the reaction sn-glycerol 1-phosphate + NADP(+) = dihydroxyacetone phosphate + NADPH + H(+). It participates in membrane lipid metabolism; glycerophospholipid metabolism. Catalyzes the NAD(P)H-dependent reduction of dihydroxyacetonephosphate (DHAP or glycerone phosphate) to glycerol 1-phosphate (G1P). The G1P thus generated is used as the glycerophosphate backbone of phospholipids in the cellular membranes of Archaea. This Methanococcus maripaludis (strain C5 / ATCC BAA-1333) protein is Glycerol-1-phosphate dehydrogenase [NAD(P)+].